Consider the following 469-residue polypeptide: Swarming motility regulation sensor protein RssA (469 aa).

2 helical membrane-spanning segments follow: residues 12–32 and 167–187; these read IIFQ…WVKY and VPLL…AYFS. Positions 245-459 constitute a Histidine kinase domain; sequence DAAHELRTPI…GFIIDLPESY (215 aa). Histidine 248 is subject to Phosphohistidine; by autocatalysis.

It is found in the cell inner membrane. It carries out the reaction ATP + protein L-histidine = ADP + protein N-phospho-L-histidine.. In terms of biological role, member of the two-component regulatory system RssA/RssB involved in regulation of swarming motility which has been shown to be inhibited by saturated fatty acids. RssA/RssB regulates cellular fatty acid composition, hemolysin production and cell surface topography. RssA/RssB negatively regulates the activity of SlhBA. It can also act as a negative regulator for the control of the swarming initiation. The protein is Swarming motility regulation sensor protein RssA (rssA) of Serratia marcescens.